Reading from the N-terminus, the 239-residue chain is tRNA (guanine-N(1)-)-methyltransferase (239 aa).

Residues glycine 115 and methionine 134 to leucine 139 contribute to the S-adenosyl-L-methionine site. The interval glutamine 210–proline 239 is disordered. Basic and acidic residues predominate over residues glutamine 211–leucine 224.

The protein belongs to the RNA methyltransferase TrmD family. As to quaternary structure, homodimer.

It is found in the cytoplasm. It catalyses the reaction guanosine(37) in tRNA + S-adenosyl-L-methionine = N(1)-methylguanosine(37) in tRNA + S-adenosyl-L-homocysteine + H(+). In terms of biological role, specifically methylates guanosine-37 in various tRNAs. The protein is tRNA (guanine-N(1)-)-methyltransferase of Synechococcus sp. (strain CC9311).